Consider the following 534-residue polypeptide: Zinc finger protein 397 (534 aa).

The residue at position 31 (serine 31) is a Phosphoserine. The SCAN box domain maps to 50-132 (RQQFRKFCYQ…TLLEDLEREF (83 aa)). Residues lysine 55, lysine 171, lysine 202, and lysine 252 each participate in a glycyl lysine isopeptide (Lys-Gly) (interchain with G-Cter in SUMO2) cross-link. Positions 197-242 (DISGEKSQRLSQEPSFGGFSEHKSSLEWQQGSAPGETLRRSPSQRA) are disordered. 9 C2H2-type zinc fingers span residues 285–307 (YRCD…QRIH), 313–335 (YKCN…QRIH), 341–363 (YECS…RKIH), 369–391 (CKCN…QRIH), 397–419 (YECN…QRIH), 425–447 (YECN…QRIH), 453–475 (YECN…QRIH), 481–503 (YQCN…QRIH), and 509–531 (YICS…QRVH).

This sequence belongs to the krueppel C2H2-type zinc-finger protein family.

It localises to the nucleus. In terms of biological role, DNA-dependent transcriptional repressor. The protein is Zinc finger protein 397 (ZNF397) of Bos taurus (Bovine).